A 1016-amino-acid chain; its full sequence is KN motif and ankyrin repeat domain-containing protein 4 (1016 aa).

6 disordered regions span residues 1-26 (MEKI…YPYS), 70-91 (PRNF…QQNW), 235-259 (AEPE…AVQS), 401-485 (LSQE…LPRG), 506-563 (EEGS…SPQD), and 622-755 (AQAP…VSHL). 2 stretches are compositionally biased toward polar residues: residues 70-80 (PRNFSLPNSGD) and 246-258 (SHLS…SAVQ). Residues 346–409 (SSLKNQVLAL…KLSQERASEA (64 aa)) are a coiled coil. Basic and acidic residues-rich tracts occupy residues 401–414 (LSQE…DRTD) and 445–454 (PECRAPRAEK). Polar residues predominate over residues 460–469 (VQNNHKQSYP). Pro residues predominate over residues 632 to 650 (TPAPPPSTPPPPPPPPPEI). A Phosphothreonine modification is found at Thr-639. Residues 695–708 (TSGEDSSPEDLSDS) are compositionally biased toward acidic residues. 2 stretches are compositionally biased toward basic and acidic residues: residues 709–727 (ETEK…DLHP) and 745–755 (TSDRGEEVSHL). ANK repeat units follow at residues 838–868 (SGNT…NVDH), 877–905 (VMIT…NVNI), 910–939 (GGQT…DVNL), 943–973 (DGSS…NSSL), and 977–1007 (AGRT…PGRS).

The protein resides in the cytoplasm. Its function is as follows. May be involved in the control of cytoskeleton formation by regulating actin polymerization. The chain is KN motif and ankyrin repeat domain-containing protein 4 (Kank4) from Mus musculus (Mouse).